A 262-amino-acid chain; its full sequence is Indole-3-glycerol phosphate synthase (262 aa).

It belongs to the TrpC family.

It carries out the reaction 1-(2-carboxyphenylamino)-1-deoxy-D-ribulose 5-phosphate + H(+) = (1S,2R)-1-C-(indol-3-yl)glycerol 3-phosphate + CO2 + H2O. It participates in amino-acid biosynthesis; L-tryptophan biosynthesis; L-tryptophan from chorismate: step 4/5. The chain is Indole-3-glycerol phosphate synthase from Clostridium acetobutylicum (strain ATCC 824 / DSM 792 / JCM 1419 / IAM 19013 / LMG 5710 / NBRC 13948 / NRRL B-527 / VKM B-1787 / 2291 / W).